Reading from the N-terminus, the 338-residue chain is 1-aminocyclopropane-1-carboxylate deaminase (338 aa).

Lysine 51 bears the N6-(pyridoxal phosphate)lysine mark. Serine 78 (nucleophile) is an active-site residue.

Belongs to the ACC deaminase/D-cysteine desulfhydrase family. Homotrimer. Requires pyridoxal 5'-phosphate as cofactor.

The enzyme catalyses 1-aminocyclopropane-1-carboxylate + H2O = 2-oxobutanoate + NH4(+). Functionally, catalyzes a cyclopropane ring-opening reaction, the irreversible conversion of 1-aminocyclopropane-1-carboxylate (ACC) to ammonia and alpha-ketobutyrate. Allows growth on ACC as a nitrogen source. This Paracidovorax citrulli (strain AAC00-1) (Acidovorax citrulli) protein is 1-aminocyclopropane-1-carboxylate deaminase.